Consider the following 115-residue polypeptide: Putative gamma-glutamylcyclotransferase VC_2546 (115 aa).

Residue 8-11 (YGTL) participates in substrate binding. The active-site Proton acceptor is the E73.

This sequence belongs to the gamma-glutamylcyclotransferase family.

Functionally, putative gamma-glutamylcyclotransferase. This is Putative gamma-glutamylcyclotransferase VC_2546 from Vibrio cholerae serotype O1 (strain ATCC 39315 / El Tor Inaba N16961).